A 207-amino-acid polypeptide reads, in one-letter code: Large ribosomal subunit protein uL4 (207 aa).

A disordered region spans residues 55–76; that stretch reads ALVSGGGKKPWRQKGTGRARHG. The segment covering 63 to 76 has biased composition (basic residues); that stretch reads KPWRQKGTGRARHG.

This sequence belongs to the universal ribosomal protein uL4 family. In terms of assembly, part of the 50S ribosomal subunit.

In terms of biological role, one of the primary rRNA binding proteins, this protein initially binds near the 5'-end of the 23S rRNA. It is important during the early stages of 50S assembly. It makes multiple contacts with different domains of the 23S rRNA in the assembled 50S subunit and ribosome. Forms part of the polypeptide exit tunnel. The polypeptide is Large ribosomal subunit protein uL4 (Phytoplasma mali (strain AT)).